We begin with the raw amino-acid sequence, 278 residues long: MWSAQLLSQLLPLWPLLLLSVLPPAQGSSHRSPPAPARPPCVRGGPSAPRHVCVWERAPPPSRSPRVPRSRRQVVPGTAPPATPSGFEEGPPSSQYPWAIVWGPTVSREDGGDPNSVNPGFLPLDYGFAAPHGLATPHPNSDSMRDDGDGLILGETPATLRPFLFGGRGEGVDPQLYVTITISIIIVLVATGIIFKFCWDRSQKRRRPSGQQGALRQEESQQPLTDLSPAGVTVLGAFGDSPTPTPDHEEPRGGPRPGMPQPKGAPAFQLNRIPLVNL.

An N-terminal signal peptide occupies residues 1–27 (MWSAQLLSQLLPLWPLLLLSVLPPAQG). Residues 25–93 (AQGSSHRSPP…PSGFEEGPPS (69 aa)) form a disordered region. At 28 to 174 (SSHRSPPAPA…FGGRGEGVDP (147 aa)) the chain is on the extracellular side. Threonine 136 is a glycosylation site (O-linked (GalNAc...) threonine). The chain crosses the membrane as a helical span at residues 175 to 195 (QLYVTITISIIIVLVATGIIF). Residues 196–278 (KFCWDRSQKR…QLNRIPLVNL (83 aa)) are Cytoplasmic-facing. Residues 206-278 (RRPSGQQGAL…QLNRIPLVNL (73 aa)) form a disordered region. The segment covering 209-225 (SGQQGALRQEESQQPLT) has biased composition (polar residues).

O-glycosylation at Thr-136 is essential for recognition by PILRA. Mainly expressed in brain and spinal cord. Weak expression also detected in heart, kidney, spleen and lymph node. Virtually no expression detected in liver and embryo relative to brain.

It is found in the membrane. Acts as a ligand for PILRA in neuronal tissues, where it may be involved in immune regulation. This chain is PILR alpha-associated neural protein (Pianp), found in Mus musculus (Mouse).